A 373-amino-acid chain; its full sequence is Bifunctional enzyme IspD/IspF (373 aa).

The segment at 1–213 (MSDLTLVLLG…CLQKPSATKR (213 aa)) is 2-C-methyl-D-erythritol 4-phosphate cytidylyltransferase. The segment at 213-373 (RIGNGLDVHA…TLHYFDWSEI (161 aa)) is 2-C-methyl-D-erythritol 2,4-cyclodiphosphate synthase. A divalent metal cation is bound by residues D219 and H221. 4-CDP-2-C-methyl-D-erythritol 2-phosphate-binding positions include 219–221 (DVH) and 245–246 (HS). Residue H253 coordinates a divalent metal cation. 4-CDP-2-C-methyl-D-erythritol 2-phosphate is bound by residues 267–269 (DIG), 272–276 (FPDSD), 343–346 (TTTE), F350, and R353.

This sequence in the N-terminal section; belongs to the IspD/TarI cytidylyltransferase family. IspD subfamily. It in the C-terminal section; belongs to the IspF family. Requires a divalent metal cation as cofactor.

It carries out the reaction 2-C-methyl-D-erythritol 4-phosphate + CTP + H(+) = 4-CDP-2-C-methyl-D-erythritol + diphosphate. It catalyses the reaction 4-CDP-2-C-methyl-D-erythritol 2-phosphate = 2-C-methyl-D-erythritol 2,4-cyclic diphosphate + CMP. It participates in isoprenoid biosynthesis; isopentenyl diphosphate biosynthesis via DXP pathway; isopentenyl diphosphate from 1-deoxy-D-xylulose 5-phosphate: step 2/6. Its pathway is isoprenoid biosynthesis; isopentenyl diphosphate biosynthesis via DXP pathway; isopentenyl diphosphate from 1-deoxy-D-xylulose 5-phosphate: step 4/6. Bifunctional enzyme that catalyzes the formation of 4-diphosphocytidyl-2-C-methyl-D-erythritol from CTP and 2-C-methyl-D-erythritol 4-phosphate (MEP) (IspD), and catalyzes the conversion of 4-diphosphocytidyl-2-C-methyl-D-erythritol 2-phosphate (CDP-ME2P) to 2-C-methyl-D-erythritol 2,4-cyclodiphosphate (ME-CPP) with a corresponding release of cytidine 5-monophosphate (CMP) (IspF). The polypeptide is Bifunctional enzyme IspD/IspF (Nitratiruptor sp. (strain SB155-2)).